A 410-amino-acid chain; its full sequence is Auxin-induced protein 5NG4 (410 aa).

The Cytoplasmic segment spans residues 1–16; it reads MASNIMQRCNVFMSER. Residues 17-37 form a helical membrane-spanning segment; that stretch reads VKLHAAMLALQFGYAGFHIVS. At 38-47 the chain is on the extracellular side; that stretch reads RAALNMGVSK. The chain crosses the membrane as a helical span at residues 48-68; that stretch reads VVFPVYRNILALMLIGPCAYF. At 69 to 74 the chain is on the cytoplasmic side; sequence LEKKER. A helical transmembrane segment spans residues 75–95; it reads PALTLSFLIQFFLLALCGITG. Over 96–109 the chain is Extracellular; it reads QSRILSLRIVLHIP. The chain crosses the membrane as a helical span at residues 110 to 130; the sequence is TFASAIQNSVPAITFIMAAAL. Over 131–141 the chain is Cytoplasmic; the sequence is RLEKVHISRRD. A helical membrane pass occupies residues 142–162; the sequence is GLAKIIGTVACVSGATIITLY. Residues 163-196 lie on the Extracellular side of the membrane; that stretch reads KGPPITHIWRPNLEVTASYFKAFQGNDLSAKSEN. An N-linked (GlcNAc...) asparagine glycan is attached at Asn196. Residues 197-217 traverse the membrane as a helical segment; sequence WTLGCIYLLGNCLAWSGWIVL. One can recognise an EamA domain in the interval 209-338; sequence LAWSGWIVLQ…IIIGLYLVLW (130 aa). Residues 218 to 229 lie on the Cytoplasmic side of the membrane; that stretch reads QAPVLKRYPARL. Residues 230 to 250 form a helical membrane-spanning segment; it reads SVTSFTCFFGVIQFLIIAAFF. The Extracellular portion of the chain corresponds to 251–264; it reads ETDLEHWKIHSGGE. Residues 265-285 form a helical membrane-spanning segment; the sequence is LFTILYAGFVASGIAFSVQIW. At 286–292 the chain is on the cytoplasmic side; it reads CIDRGGP. Residues 293–313 traverse the membrane as a helical segment; the sequence is VFVAVYQPVQTIAVAIMASII. Residues 314–317 are Extracellular-facing; that stretch reads LGEQ. The helical transmembrane segment at 318–338 threads the bilayer; the sequence is FYLGGIFGAILIIIGLYLVLW. Residues 339-410 are Cytoplasmic-facing; the sequence is GKSEEKRLGL…IPSPSDEPQP (72 aa).

Belongs to the drug/metabolite transporter (DMT) superfamily. Plant drug/metabolite exporter (P-DME) (TC 2.A.7.4) family.

Its subcellular location is the membrane. The sequence is that of Auxin-induced protein 5NG4 from Pinus taeda (Loblolly pine).